A 482-amino-acid polypeptide reads, in one-letter code: Long chain base biosynthesis protein 1c (482 aa).

The chain crosses the membrane as a helical span at residues 33–53 (FGIHIDGHLVVEGLLIAAILF).

This sequence belongs to the class-II pyridoxal-phosphate-dependent aminotransferase family. In terms of assembly, heterodimer with LCB2. Component of the serine palmitoyltransferase (SPT) complex, composed of LCB1 and LCB2. It depends on pyridoxal 5'-phosphate as a cofactor.

It is found in the endoplasmic reticulum membrane. It carries out the reaction L-serine + hexadecanoyl-CoA + H(+) = 3-oxosphinganine + CO2 + CoA. It participates in lipid metabolism; sphingolipid metabolism. In terms of biological role, serine palmitoyltransferase (SPT). The heterodimer formed with LCB2 constitutes the catalytic core. The protein is Long chain base biosynthesis protein 1c of Oryza sativa subsp. japonica (Rice).